The sequence spans 490 residues: Betaine aldehyde dehydrogenase (490 aa).

T26, I27, and D93 together coordinate K(+). 150-152 (GAW) is an NAD(+) binding site. The active-site Charge relay system is K162. 176-179 (KPSE) provides a ligand contact to NAD(+). V180 is a K(+) binding site. 230–233 (GVAS) contacts NAD(+). L246 provides a ligand contact to K(+). E252 acts as the Proton acceptor in catalysis. G254, C286, and E387 together coordinate NAD(+). The Nucleophile role is filled by C286. Position 286 is a cysteine sulfenic acid (-SOH) (C286). 2 residues coordinate K(+): K457 and G460. E464 serves as the catalytic Charge relay system.

The protein belongs to the aldehyde dehydrogenase family. Dimer of dimers. Requires K(+) as cofactor.

It carries out the reaction betaine aldehyde + NAD(+) + H2O = glycine betaine + NADH + 2 H(+). It functions in the pathway amine and polyamine biosynthesis; betaine biosynthesis via choline pathway; betaine from betaine aldehyde: step 1/1. In terms of biological role, involved in the biosynthesis of the osmoprotectant glycine betaine. Catalyzes the irreversible oxidation of betaine aldehyde to the corresponding acid. The protein is Betaine aldehyde dehydrogenase of Escherichia coli (strain 55989 / EAEC).